The primary structure comprises 271 residues: Dioscorin dioA3 (271 aa).

The first 21 residues, 1 to 21, serve as a signal peptide directing secretion; it reads MSSSTLLHLLLLSSLLFSCLS. Residues 28 to 262 form the Alpha-carbonic anhydrase domain; sequence DEFSYIEGNP…TNFRSVFYFE (235 aa). Cys-53 and Cys-212 are oxidised to a cystine. The active-site Proton acceptor is the His-94. L-ascorbate is bound by residues Asp-95, 120–122, Gln-139, and 208–209; these read HFH and TA.

This sequence belongs to the alpha-carbonic anhydrase family. As to quaternary structure, monomer. Homodimer. Post-translationally, not glycosylated. As to expression, expressed in tuber (at protein level).

The catalysed reaction is hydrogencarbonate + H(+) = CO2 + H2O. It catalyses the reaction 2 monodehydro-L-ascorbate radical + NADH + H(+) = 2 L-ascorbate + NAD(+). With respect to regulation, the carbonate dehydratase activity is not substantially changed by the addition of Zn(2+). Its function is as follows. Storage protein of tuber. Involved in protection against oxidative stress. Has carbonate dehydratase, trypsin inhibitor, dehydroascorbate (DHA) reductase and monodehydroascorbate (MDA) reductase activities. Catalyzes the reactions of carbonate dehydratase and DHA reductase independently of zinc and glutathione (GSH). The coupled reaction is capable of recycling a plant antioxidant ascorbate using ubiquitous compounds H(2)O and CO(2). Exhibits antioxidant activity. Able to scavenge 1,1-diphenyl-2-picrylhydrazyl (DPPH) radical. Exhibits immunomodulatory activity. Activates Toll-like receptor 4 signaling pathways by up-regulating the gene expression of pro-inflammatory cytokines, such as tumor necrosis factor alpha, interleukin-1 beta and interleukin-6, and chemokines RANTES and MCP-1, in mouse RAW 264.7 macrophages. Stimulates the phagocytosis of E.coli by the LPS-treated mouse macrophages. In Dioscorea japonica (Japanese yam), this protein is Dioscorin dioA3.